Here is a 237-residue protein sequence, read N- to C-terminus: Sugar fermentation stimulation protein homolog (237 aa).

This sequence belongs to the SfsA family.

The sequence is that of Sugar fermentation stimulation protein homolog from Pseudomonas fluorescens (strain Pf0-1).